The chain runs to 118 residues: Small ribosomal subunit protein mS37 (118 aa).

In terms of domain architecture, CHCH spans 42–84; sequence EATCITEMSVMMACWKQNEFRDDACRKEIQGFLDCAARAQEAR. 2 short sequence motifs (cx9C motif) span residues 45 to 55 and 66 to 76; these read CITEMSVMMAC and CRKEIQGFLDC. 2 disulfides stabilise this stretch: C45-C76 and C55-C66.

It belongs to the mitochondrion-specific ribosomal protein mS37 family. As to quaternary structure, component of the mitochondrial small ribosomal subunit (mt-SSU). Mature mammalian 55S mitochondrial ribosomes consist of a small (28S) and a large (39S) subunit. The 28S small subunit contains a 12S ribosomal RNA (12S mt-rRNA) and 30 different proteins. The 39S large subunit contains a 16S rRNA (16S mt-rRNA), a copy of mitochondrial valine transfer RNA (mt-tRNA(Val)), which plays an integral structural role, and 52 different proteins.

It localises to the mitochondrion. It is found in the nucleus. This chain is Small ribosomal subunit protein mS37 (CHCHD1), found in Homo sapiens (Human).